A 405-amino-acid chain; its full sequence is Dematin (405 aa).

Disordered regions lie at residues 1–30 (MERL…PSSI), 79–158 (PRSR…GSPQ), 173–192 (FPAA…TDYW), and 203–332 (TEWR…DRGN). Low complexity predominate over residues 11–29 (SPGSVSPSRDSSVPGSPSS). 9 positions are modified to phosphoserine: serine 16, serine 18, serine 26, serine 92, serine 96, serine 105, serine 110, serine 113, and serine 156. A compositionally biased stretch (polar residues) spans 108–123 (IISQASAPRTTGTPRT). Residues 216–227 (EEEEEEEDDDSG) are compositionally biased toward acidic residues. Positions 224 to 308 (DDSGEEMKAL…SRLQSTEFSP (85 aa)) are interaction with RASGRF2. Serine 226 carries the phosphoserine modification. 2 stretches are compositionally biased toward basic and acidic residues: residues 228-242 (EEMK…EELS) and 252-261 (ILKEEMEKSL). A phosphoserine mark is found at serine 269, serine 279, serine 289, serine 303, serine 315, serine 333, serine 372, and serine 383. Positions 276–322 (FHTSLHQGTSKSSSLPAYGRTTLSRLQSTEFSPSGSETGSPGLQNGE) are enriched in polar residues. Positions 337–405 (VLEQKIYPYE…NELKKKASLF (69 aa)) constitute an HP domain. Serine 403 bears the Phosphoserine; by PKA mark.

This sequence belongs to the villin/gelsolin family. As to quaternary structure, monomeric (isoform 2); under reducing conditions. Self-associates. Exists under oxidizing condition as a trimer of two isoforms 2 and isoform 1 linked by disulfide bonds. Found in a complex with DMTN, F-actin and spectrin. Found in a complex with ADD2, DMTN and SLC2A1. Interacts with F-actin, ITPKB, RASGRF2 and spectrin. Isoform 2 interacts with SLC2A1 (via C-terminus cytoplasmic region). Isoform 1 and isoform 2 interact (phosphorylated form) with plasmodium berghei 14-3-3 protein; the interaction occurs in a PKA-dependent manner. Post-translationally, phosphorylated. Phosphorylation at Ser-403 by PKA causes the C-terminal headpiece domain to associate with the N-terminal core domain, and leads to the inhibition of its actin bundling activity. The N-terminus is blocked. In terms of tissue distribution, expressed in platelets (at protein level). Expressed in heart, brain, lung, skeletal muscle, and kidney.

It localises to the cytoplasm. Its subcellular location is the cytosol. The protein resides in the perinuclear region. The protein localises to the cytoskeleton. It is found in the cell membrane. It localises to the membrane. Its subcellular location is the endomembrane system. The protein resides in the cell projection. Functionally, membrane-cytoskeleton-associated protein with F-actin-binding activity that induces F-actin bundles formation and stabilization. Its F-actin-bundling activity is reversibly regulated upon its phosphorylation by the cAMP-dependent protein kinase A (PKA). Binds to the erythrocyte membrane glucose transporter-1 SLC2A1/GLUT1, and hence stabilizes and attaches the spectrin-actin network to the erythrocytic plasma membrane. Plays a role in maintaining the functional integrity of PKA-activated erythrocyte shape and the membrane mechanical properties. Also plays a role as a modulator of actin dynamics in fibroblasts; acts as a negative regulator of the RhoA activation pathway. In platelets, functions as a regulator of internal calcium mobilization across the dense tubular system that affects platelet granule secretion pathways and aggregation. Also required for the formation of a diverse set of cell protrusions, such as filopodia and lamellipodia, necessary for platelet cell spreading, motility and migration. Acts as a tumor suppressor and inhibits malignant cell transformation. The polypeptide is Dematin (DMTN) (Homo sapiens (Human)).